The chain runs to 75 residues: MATGTRTSCYRRATSSLMARLARRPSSLTRFTASERRSRTWWTGSGCAGVSWRTQRLSTTVTRPASTTAATLSAG.

This is an uncharacterized protein from Acidithiobacillus ferridurans.